Reading from the N-terminus, the 638-residue chain is DEAD-box ATP-dependent RNA helicase 52B (638 aa).

Composition is skewed to low complexity over residues 1–21 and 40–67; these read MRSS…AAAA and GQAA…VGQP. Positions 1-129 are disordered; the sequence is MRSSWADSAA…WDRRDREPDP (129 aa). Positions 79–112 are enriched in gly residues; that stretch reads VNGGGGGGGGSVGGSRQGFGAGGRGGGGGGGGGA. The span at 119–128 shows a compositional bias: basic and acidic residues; it reads GWDRRDREPD. A Q motif motif is present at residues 169-197; the sequence is NTFAEIDLGDALNENIRRCKYVKPTPVQR. Residues 200 to 384 enclose the Helicase ATP-binding domain; sequence IPISIAGRDL…SDFLADYIFL (185 aa). An ATP-binding site is contributed by 213–220; that stretch reads AQTGSGKT. Residues 328-331 carry the DEAD box motif; the sequence is DEAD. The Helicase C-terminal domain maps to 411–562; that stretch reads YLMDLLHAQR…EVPQWLERYA (152 aa). A disordered region spans residues 565–638; it reads SSFGGGGGRN…GGQGFSSAWD (74 aa). A compositionally biased stretch (gly residues) spans 567–583; it reads FGGGGGRNRRSGGGARF. The span at 584 to 593 shows a compositional bias: basic and acidic residues; sequence GGRDFRRDRG. Gly residues predominate over residues 594–632; sequence SGGGGYGGGGGGYGGGGYGGGGGGGGYGGGSSYGGGGQG.

This sequence belongs to the DEAD box helicase family. DDX3/DED1 subfamily.

It catalyses the reaction ATP + H2O = ADP + phosphate + H(+). The sequence is that of DEAD-box ATP-dependent RNA helicase 52B (PL10B) from Oryza sativa subsp. japonica (Rice).